A 631-amino-acid polypeptide reads, in one-letter code: Phosphomethylpyrimidine synthase (631 aa).

Substrate contacts are provided by residues Asn239, Met268, Tyr297, His333, 353–355 (SRG), 394–397 (DGLR), and Glu433. Residue His437 participates in Zn(2+) binding. Substrate is bound at residue Tyr460. His501 lines the Zn(2+) pocket. Cys581, Cys584, and Cys589 together coordinate [4Fe-4S] cluster.

It belongs to the ThiC family. Homodimer. The cofactor is [4Fe-4S] cluster.

The enzyme catalyses 5-amino-1-(5-phospho-beta-D-ribosyl)imidazole + S-adenosyl-L-methionine = 4-amino-2-methyl-5-(phosphooxymethyl)pyrimidine + CO + 5'-deoxyadenosine + formate + L-methionine + 3 H(+). It functions in the pathway cofactor biosynthesis; thiamine diphosphate biosynthesis. Catalyzes the synthesis of the hydroxymethylpyrimidine phosphate (HMP-P) moiety of thiamine from aminoimidazole ribotide (AIR) in a radical S-adenosyl-L-methionine (SAM)-dependent reaction. The sequence is that of Phosphomethylpyrimidine synthase from Salmonella schwarzengrund (strain CVM19633).